The primary structure comprises 46 residues: GIFSKLAGKKIKNLLISGLKNVGKEVGMDVVRTGIDIAGCKIKGEC.

A disulfide bridge connects residues C40 and C46.

Belongs to the frog skin active peptide (FSAP) family. Brevinin subfamily. Expressed by the skin glands.

The protein localises to the secreted. Its function is as follows. Shows antibacterial activity against representative Gram-negative and Gram-positive bacterial species, and hemolytic activity. This is Esculentin-1A from Pelophylax lessonae (Pool frog).